The sequence spans 599 residues: Cytochrome P450 monooxygenase ALT8 (599 aa).

Helical transmembrane passes span 4 to 21 and 36 to 56; these read LACV…VYLG and ILFG…PAYF. An N-linked (GlcNAc...) asparagine glycan is attached at N127. Residues 495-504 are compositionally biased toward low complexity; that stretch reads DDSSAASPSF. The tract at residues 495-522 is disordered; that stretch reads DDSSAASPSFGGSGKRKSQYTDTHKEPS. A heme-binding site is contributed by C539.

This sequence belongs to the cytochrome P450 family. Heme serves as cofactor.

The protein localises to the membrane. It functions in the pathway secondary metabolite biosynthesis. Cytochrome P450 monooxygenase; part of the gene cluster that mediates the biosynthesis of the host-selective toxins (HSTs) AAL-toxins, sphinganine-analog mycotoxins responsible for Alternaria stem canker on tomato by the tomato pathotype. The biosynthesis starts with the polyketide synthase ALT1-catalyzed C-16 carbon chain assembly from one starter acetyl-CoA unit with malonyl-CoA extender units. ALT1 also selectively transfers methyl groups at the first and the third cycle of chain elongation for AAL toxin. The C-16 polyketide chain is released from the enzyme by a nucleophilic attack of a carbanion, which is derived from R-carbon of glycin by decarboxylation, on the carbonyl carbon of polyketide acyl chain. This step is probably catalyzed by a pyridoxal 5'-phosphate-dependent aminoacyl transferase ALT4. The respective functions of the other enzymes encoded by the cluster have still to be elucidated. The sphingosine N-acyltransferase-like protein ALT7 seems not to act as a resistance/self-tolerance factor against the toxin in the toxin biosynthetic gene cluster, contrary to what is expected. The protein is Cytochrome P450 monooxygenase ALT8 of Alternaria alternata (Alternaria rot fungus).